Here is a 341-residue protein sequence, read N- to C-terminus: L-threonine 3-dehydrogenase (341 aa).

Residue Cys-38 participates in Zn(2+) binding. Catalysis depends on charge relay system residues Thr-40 and His-43. Positions 63, 64, 93, 96, 99, and 107 each coordinate Zn(2+). NAD(+)-binding positions include Ile-175, Asp-195, Arg-200, 262–264, and 286–287; these read LGI and IY.

The protein belongs to the zinc-containing alcohol dehydrogenase family. Homotetramer. The cofactor is Zn(2+).

The protein resides in the cytoplasm. The catalysed reaction is L-threonine + NAD(+) = (2S)-2-amino-3-oxobutanoate + NADH + H(+). The protein operates within amino-acid degradation; L-threonine degradation via oxydo-reductase pathway; glycine from L-threonine: step 1/2. Functionally, catalyzes the NAD(+)-dependent oxidation of L-threonine to 2-amino-3-ketobutyrate. This chain is L-threonine 3-dehydrogenase, found in Enterobacter sp. (strain 638).